A 510-amino-acid chain; its full sequence is MTELLWAVVALLAGLAGGAGIGVYWANNGVSSLVQRKAAEARLLIEEARSQQKEILLQAKDEALRIRNEAEAELRESRQSLQKQEERLQRKEENIDRKLEGIERRERLIQQRERQIEQLTQEAERLKRQQAQELERISQLSREEARSIILAEVERETREDAARRIRELEQQTKEEADKIARKIIGLAIQRCASDYVAEMTVSTVNLPSEELKGRIIGREGRNIRAFEQITGVDIIVDDTPEAVTLSCHDPVRREVARVALLKLLKDGRIHPSRIEEVVHKTQLEIEQIMREEGERVAYEANVQGLHPDLIKLLGRLKYRTSYGQNVLQHSLECALLAAHMAAELGANVNIAKTAALLHDIGKAVDHEVQGPHALIGAEIARRLGRSAAIVHAIAAHHYDEEPQTVEAFLVIAADAISGARPGARRETLDLYIKRLEALETVATSFPGVQRAFAVQAGREVRVMVQPDQIDDLASIHLARNVAKKIEESLQYPGQIKVTIIRETRAVDYAR.

Residues 4 to 24 form a helical membrane-spanning segment; that stretch reads LLWAVVALLAGLAGGAGIGVY. The KH domain occupies 200-260; it reads TVSTVNLPSE…VRREVARVAL (61 aa). Residues 326–419 enclose the HD domain; that stretch reads VLQHSLECAL…VIAADAISGA (94 aa).

Belongs to the RNase Y family.

Its subcellular location is the cell membrane. Functionally, endoribonuclease that initiates mRNA decay. The chain is Ribonuclease Y from Chloroflexus aurantiacus (strain ATCC 29366 / DSM 635 / J-10-fl).